A 115-amino-acid chain; its full sequence is MWDPLLNEFPETVHGFRCMLAIKYLQLVENTYSPDTLGYDLIRDLISVIRARDYGETSRRYCHFHSRLEGASPAELRQPLYGSCCCPHCPRHQKTNVVKQAHVPEAHDVPDVQKP.

It belongs to the geminiviridae protein AV2/V2 family. In terms of assembly, interacts with host SGS3.

The protein resides in the host cytoplasm. The protein localises to the host perinuclear region. In terms of biological role, through its interaction with host SGS3, acts as a suppressor of RNA-mediated gene silencing, also known as post-transcriptional gene silencing (PTGS), a mechanism of plant viral defense that limits the accumulation of viral RNAs. The chain is Protein V2 from Tomato yellow leaf curl China virus (TYLCCNV).